The sequence spans 133 residues: MNLMLQNLNNIRTLRAMAREFSIDVLEEMLEKFRVVTKERREEEELQQRQLAEKQEKINAFLELMKADGINPEELFAMDSAMPRSAKKRQPRPAKYRFTDFNGEEKTWTGQGRTPKPIAQALAAGKSLDDFLI.

Residues 81-115 (AMPRSAKKRQPRPAKYRFTDFNGEEKTWTGQGRTP) are disordered. Basic residues predominate over residues 85-95 (SAKKRQPRPAK). The DNA-binding element occupies 111–116 (QGRTPK).

This sequence belongs to the histone-like protein H-NS family. Forms homodimers, can interact with H-NS.

The protein resides in the cytoplasm. It localises to the nucleoid. In terms of biological role, a DNA-binding protein that acts in a fashion similar to H-NS, repressing gene transcription. A subset of H-NS/StpA-regulated genes require auxillary proteins for repression; these auxillary proteins (Hha and other similar proteins) may also modulate oligomerization of the H-NS/StpA complex. The sequence is that of DNA-binding protein StpA (stpA) from Salmonella typhi.